Reading from the N-terminus, the 165-residue chain is MAILTIEELAERLPPYQAVAGLDLGTKTIGLSVSDLGRRFATPRDVIRRVKFGIDAQALLFFAEKEKVAAFVIGLPVNMDGSEGPRCQATRAFVRTMGERTDIPSVLWDERLSTVAAERVLIEMDVSRKKRADRIDSAAASFILQGALDRLALLARGASGDRDAP.

The protein belongs to the YqgF nuclease family.

The protein resides in the cytoplasm. Functionally, could be a nuclease involved in processing of the 5'-end of pre-16S rRNA. This is Putative pre-16S rRNA nuclease from Sinorhizobium medicae (strain WSM419) (Ensifer medicae).